The primary structure comprises 527 residues: Glutamate--cysteine ligase (527 aa).

Belongs to the glutamate--cysteine ligase type 1 family. Type 1 subfamily.

It catalyses the reaction L-cysteine + L-glutamate + ATP = gamma-L-glutamyl-L-cysteine + ADP + phosphate + H(+). It functions in the pathway sulfur metabolism; glutathione biosynthesis; glutathione from L-cysteine and L-glutamate: step 1/2. This is Glutamate--cysteine ligase from Bordetella petrii (strain ATCC BAA-461 / DSM 12804 / CCUG 43448).